Reading from the N-terminus, the 1368-residue chain is Kinesin-like protein KIF24 (1368 aa).

Positions 1–64 constitute an SAM domain; that stretch reads MASWLYECLC…FQLIKIIKIM (64 aa). Residues 89-112 are disordered; the sequence is ELRSGPRRQLNFDSPADNKDRNAS. Residues Ser-102 and Ser-112 each carry the phosphoserine modification. A Kinesin motor domain is found at 223–546; that stretch reads KIRVCVRKRP…LRYADRVKEL (324 aa). Residue 313-320 participates in ATP binding; it reads GQTGAGKT. Ser-478 is modified (phosphoserine). Residues 478-709 are interaction with MPHOSPH9; sequence SLLALKECIR…STKCKKVQTV (232 aa). Residues 557 to 576 are compositionally biased toward polar residues; sequence TSRNRTSGNSSPKRIQSSPG. Disordered regions lie at residues 557–584 and 602–639; these read TSRN…DKCS and GSTR…SPSQ. At Ser-584 the chain carries Phosphoserine. Thr-621 carries the phosphothreonine; by NEK2 modification. Ser-622 carries the post-translational modification Phosphoserine; by NEK2. Ser-646 bears the Phosphoserine mark. Disordered stretches follow at residues 651 to 670, 729 to 753, 792 to 849, 864 to 938, and 952 to 984; these read TVRS…PLCS, HRAE…WTNI, QYRP…NTLE, GPEK…LAEK, and RGGG…EEDG. Residues 819–830 are compositionally biased toward acidic residues; the sequence is QVEELDDSDFSE. Residues Ser-826 and Ser-829 each carry the phosphoserine modification. Polar residues-rich tracts occupy residues 839-849 and 871-881; these read QRATKQRNTLE and ERQQSLFSSPR. Residues 882–906 show a composition bias toward basic and acidic residues; that stretch reads TGDKKDLTKSWVDSRDPINHRRAAL. A Phosphoserine modification is found at Ser-1012. Disordered stretches follow at residues 1054–1073 and 1086–1148; these read MSLL…QLVQ and GGPV…SREA. Over residues 1106–1119 the composition is skewed to polar residues; the sequence is SSATRHLWLSSSPP. The segment covering 1138–1148 has biased composition (basic and acidic residues); sequence HPADKLPSREA.

The protein belongs to the TRAFAC class myosin-kinesin ATPase superfamily. Kinesin family. In terms of assembly, interacts with CCP110, CEP97, TALPID3. Interacts with MPHOSPH9.

The protein localises to the cytoplasm. Its subcellular location is the cytoskeleton. It localises to the microtubule organizing center. It is found in the centrosome. The protein resides in the centriole. In terms of biological role, microtubule-dependent motor protein that acts as a negative regulator of ciliogenesis by mediating recruitment of CCP110 to mother centriole in cycling cells, leading to restrict nucleation of cilia at centrioles. Mediates depolymerization of microtubules of centriolar origin, possibly to suppress aberrant cilia formation. Following activation by NEK2 involved in disassembly of primary cilium during G2/M phase but does not disassemble fully formed ciliary axonemes. As cilium assembly and disassembly is proposed to coexist in a dynamic equilibrium may suppress nascent cilium assembly and, potentially, ciliar re-assembly in cells that have already disassembled their cilia ensuring the completion of cilium removal in the later stages of the cell cycle. Plays an important role in recruiting MPHOSPH9, a negative regulator of cilia formation to the distal end of mother centriole. This chain is Kinesin-like protein KIF24 (KIF24), found in Homo sapiens (Human).